Consider the following 100-residue polypeptide: Urease subunit gamma (100 aa).

The protein belongs to the urease gamma subunit family. Heterotrimer of UreA (gamma), UreB (beta) and UreC (alpha) subunits. Three heterotrimers associate to form the active enzyme.

It localises to the cytoplasm. It carries out the reaction urea + 2 H2O + H(+) = hydrogencarbonate + 2 NH4(+). It participates in nitrogen metabolism; urea degradation; CO(2) and NH(3) from urea (urease route): step 1/1. The chain is Urease subunit gamma from Thermosynechococcus vestitus (strain NIES-2133 / IAM M-273 / BP-1).